We begin with the raw amino-acid sequence, 294 residues long: Elongation factor Ts (294 aa).

The segment at 79-82 is involved in Mg(2+) ion dislocation from EF-Tu; the sequence is TDFV.

This sequence belongs to the EF-Ts family.

The protein localises to the cytoplasm. In terms of biological role, associates with the EF-Tu.GDP complex and induces the exchange of GDP to GTP. It remains bound to the aminoacyl-tRNA.EF-Tu.GTP complex up to the GTP hydrolysis stage on the ribosome. This Geobacillus thermodenitrificans (strain NG80-2) protein is Elongation factor Ts.